Consider the following 962-residue polypeptide: Ran-binding proteins 9/10 homolog (962 aa).

2 stretches are compositionally biased toward low complexity: residues Met-1–Ser-33 and Ala-41–Pro-52. Disordered regions lie at residues Met-1 to Pro-246, Glu-271 to Ser-296, and Ser-313 to Asp-402. Basic and acidic residues predominate over residues Thr-80–Ser-91. Residues Gln-118–Glu-132 show a composition bias toward low complexity. The span at Asp-146 to Asn-164 shows a compositional bias: polar residues. Positions Gln-165–Thr-202 are enriched in basic and acidic residues. Positions Ser-236–Gln-245 are enriched in polar residues. Acidic residues predominate over residues Glu-271–Val-284. Residues Ser-321–Ser-343 show a composition bias toward low complexity. Polar residues-rich tracts occupy residues Phe-351 to Ser-360 and Asn-368 to Pro-378. Residues Ser-387, Ser-393, and Ser-395 each carry the phosphoserine modification. Over residues Pro-389 to His-398 the composition is skewed to polar residues. Positions Gly-400–Phe-587 constitute a B30.2/SPRY domain. The LisH domain occupies Pro-617–Phe-649. The region spanning Ser-655–Asn-712 is the CTLH domain. The interval Glu-800–Ser-820 is disordered. Residues Ser-806–Ser-820 show a composition bias toward low complexity.

Belongs to the RANBP9/10 family. As to expression, expressed in the GSCs and in dividing cysts. Expression is reduced in the germline as individual egg chambers are formed. Isoform C is expressed in all somatic and germline cells of the ovary. Isoform D is expressed in the GSC niche.

The protein localises to the cytoplasm. It is found in the membrane. It localises to the nucleus. May be involved in JAK/STAT signaling. Isoform D is required for the proper arrangement of niche cells and is autonomously required for proper niche cell size, isoform C negatively regulates the adhesive properties of the niche. The germline stem cell (GSC) niche in ovaries is made up of two somatic cell types: 8-9 cells in a single-filed array make up the terminal filament (TF), and a tight cluster of 5 or 6 cap cells (CpC). Regulating the size and adhesive properties of the CpCs is an important component of the mechanism that controls their capacity to support stem cells, isoform C and isoform D are important factors in mediating this regulation. In contrast, isoform C acts as a positive regulator of cell adhesion in follicle cell epithelium. The sequence is that of Ran-binding proteins 9/10 homolog (RanBPM) from Drosophila melanogaster (Fruit fly).